We begin with the raw amino-acid sequence, 160 residues long: Putative pre-16S rRNA nuclease (160 aa).

This sequence belongs to the YqgF nuclease family.

The protein localises to the cytoplasm. Its function is as follows. Could be a nuclease involved in processing of the 5'-end of pre-16S rRNA. The chain is Putative pre-16S rRNA nuclease from Rhodopseudomonas palustris (strain HaA2).